The chain runs to 88 residues: Small ribosomal subunit protein uS17 (88 aa).

This sequence belongs to the universal ribosomal protein uS17 family. As to quaternary structure, part of the 30S ribosomal subunit.

Functionally, one of the primary rRNA binding proteins, it binds specifically to the 5'-end of 16S ribosomal RNA. This chain is Small ribosomal subunit protein uS17, found in Pseudomonas savastanoi pv. phaseolicola (strain 1448A / Race 6) (Pseudomonas syringae pv. phaseolicola (strain 1448A / Race 6)).